A 905-amino-acid chain; its full sequence is DNA gyrase subunit A (905 aa).

The region spanning 35–524 (IPDVRDGLKP…GEFDQDIEDL (490 aa)) is the Topo IIA-type catalytic domain. Y123 functions as the O-(5'-phospho-DNA)-tyrosine intermediate in the catalytic mechanism. A GyrA-box motif is present at residues 551–557 (QKRGGKG).

It belongs to the type II topoisomerase GyrA/ParC subunit family. In terms of assembly, heterotetramer, composed of two GyrA and two GyrB chains. In the heterotetramer, GyrA contains the active site tyrosine that forms a transient covalent intermediate with DNA, while GyrB binds cofactors and catalyzes ATP hydrolysis.

The protein resides in the cytoplasm. It catalyses the reaction ATP-dependent breakage, passage and rejoining of double-stranded DNA.. A type II topoisomerase that negatively supercoils closed circular double-stranded (ds) DNA in an ATP-dependent manner to modulate DNA topology and maintain chromosomes in an underwound state. Negative supercoiling favors strand separation, and DNA replication, transcription, recombination and repair, all of which involve strand separation. Also able to catalyze the interconversion of other topological isomers of dsDNA rings, including catenanes and knotted rings. Type II topoisomerases break and join 2 DNA strands simultaneously in an ATP-dependent manner. This Rickettsia typhi (strain ATCC VR-144 / Wilmington) protein is DNA gyrase subunit A.